Reading from the N-terminus, the 304-residue chain is Capsid protein (304 aa).

2 stretches are compositionally biased toward basic and acidic residues: residues 1–24 and 32–54; these read MGDS…REAR and FEGK…EMSL. The interval 1–54 is disordered; that stretch reads MGDSTKKAETAKDVGTSQEKREARPLPTAADFEGKDTSEDTDGRAADADGEMSL.

Belongs to the potexviruses coat protein family.

Its subcellular location is the virion. Its function is as follows. Required for genome encapsidation. Forms ribonucleoprotein complexes along with TGB1 helicase and viral RNA. In Potato virus M (strain German) (PVM), this protein is Capsid protein.